The sequence spans 91 residues: Small ribosomal subunit protein uS19 (91 aa).

Belongs to the universal ribosomal protein uS19 family.

Its function is as follows. Protein S19 forms a complex with S13 that binds strongly to the 16S ribosomal RNA. This chain is Small ribosomal subunit protein uS19, found in Bordetella avium (strain 197N).